Consider the following 241-residue polypeptide: Small ribosomal subunit protein uS3 (241 aa).

The KH type-2 domain occupies 39–109 (IRQHVEKNLS…QIRINVIEVS (71 aa)). The disordered stretch occupies residues 215–241 (EQAMAAPAPTPRKKRRPQQFEDRSNEE). Residues 232–241 (QQFEDRSNEE) are compositionally biased toward basic and acidic residues.

It belongs to the universal ribosomal protein uS3 family. In terms of assembly, part of the 30S ribosomal subunit. Forms a tight complex with proteins S10 and S14.

In terms of biological role, binds the lower part of the 30S subunit head. Binds mRNA in the 70S ribosome, positioning it for translation. In Crocosphaera subtropica (strain ATCC 51142 / BH68) (Cyanothece sp. (strain ATCC 51142)), this protein is Small ribosomal subunit protein uS3.